We begin with the raw amino-acid sequence, 292 residues long: Cytidine deaminase (292 aa).

CMP/dCMP-type deaminase domains lie at 47 to 167 and 186 to 292; these read TPLK…FGPK and DHQD…YYSL. Substrate is bound at residue 88–90; that stretch reads NQE. A Zn(2+)-binding site is contributed by His101. Glu103 acts as the Proton donor in catalysis. Cys128 and Cys131 together coordinate Zn(2+).

Belongs to the cytidine and deoxycytidylate deaminase family. In terms of assembly, homodimer. Zn(2+) is required as a cofactor.

It catalyses the reaction cytidine + H2O + H(+) = uridine + NH4(+). It carries out the reaction 2'-deoxycytidine + H2O + H(+) = 2'-deoxyuridine + NH4(+). This enzyme scavenges exogenous and endogenous cytidine and 2'-deoxycytidine for UMP synthesis. This chain is Cytidine deaminase, found in Haemophilus influenzae (strain 86-028NP).